The following is a 280-amino-acid chain: Digeranylgeranylglyceryl phosphate synthase (280 aa).

9 consecutive transmembrane segments (helical) span residues 4-24 (AAYLSIIRPVNAVVAGLAGIL), 27-47 (IIATGSIPAEFFWIFCIVLTI), 83-103 (LMYAILLFLIGNGIAILFTPL), 104-124 (PLAGIAMGNSVILWLYASFLK), 128-148 (LIGNISVSYLAASIFLFGGAI), 150-170 (GTQGIISVFPIAGATWGVMLA), 199-219 (ATIYLALISATAGVLMSLLLY), 222-242 (WGAFYLGAIILVDAIILFGAI), and 260-280 (KILKAGMFASLLVFLLSAVLL).

This sequence belongs to the UbiA prenyltransferase family. DGGGP synthase subfamily. Mg(2+) is required as a cofactor.

Its subcellular location is the cell membrane. The catalysed reaction is sn-3-O-(geranylgeranyl)glycerol 1-phosphate + (2E,6E,10E)-geranylgeranyl diphosphate = 2,3-bis-O-(geranylgeranyl)-sn-glycerol 1-phosphate + diphosphate. It participates in membrane lipid metabolism; glycerophospholipid metabolism. Its function is as follows. Prenyltransferase that catalyzes the transfer of the geranylgeranyl moiety of geranylgeranyl diphosphate (GGPP) to the C2 hydroxyl of (S)-3-O-geranylgeranylglyceryl phosphate (GGGP). This reaction is the second ether-bond-formation step in the biosynthesis of archaeal membrane lipids. The polypeptide is Digeranylgeranylglyceryl phosphate synthase (Methanospirillum hungatei JF-1 (strain ATCC 27890 / DSM 864 / NBRC 100397 / JF-1)).